The chain runs to 316 residues: Thymidylate synthase (316 aa).

DUMP contacts are provided by residues Arg23 and 178–179 (RR). Cys198 functions as the Nucleophile in the catalytic mechanism. DUMP contacts are provided by residues 218-221 (RSAD), Asn229, and 259-261 (HLY). Residue Asp221 coordinates (6R)-5,10-methylene-5,6,7,8-tetrahydrofolate. Ala315 contacts (6R)-5,10-methylene-5,6,7,8-tetrahydrofolate.

The protein belongs to the thymidylate synthase family. Bacterial-type ThyA subfamily. In terms of assembly, homodimer.

The protein localises to the cytoplasm. The enzyme catalyses dUMP + (6R)-5,10-methylene-5,6,7,8-tetrahydrofolate = 7,8-dihydrofolate + dTMP. The protein operates within pyrimidine metabolism; dTTP biosynthesis. Catalyzes the reductive methylation of 2'-deoxyuridine-5'-monophosphate (dUMP) to 2'-deoxythymidine-5'-monophosphate (dTMP) while utilizing 5,10-methylenetetrahydrofolate (mTHF) as the methyl donor and reductant in the reaction, yielding dihydrofolate (DHF) as a by-product. This enzymatic reaction provides an intracellular de novo source of dTMP, an essential precursor for DNA biosynthesis. The sequence is that of Thymidylate synthase from Lacticaseibacillus paracasei (strain ATCC 334 / BCRC 17002 / CCUG 31169 / CIP 107868 / KCTC 3260 / NRRL B-441) (Lactobacillus paracasei).